A 209-amino-acid polypeptide reads, in one-letter code: Chalcone isomerase-like protein 2 (209 aa).

The protein belongs to the chalcone isomerase family. As to quaternary structure, component an active demethylxanthohumol (DMX) biosynthetic metabolon in glandular trichomes (lupulin glands) that encompasses a chalcone synthase (CHS) and a membrane-bound prenyltransferase. Interacts with CHS_H1 and PT1L. In terms of tissue distribution, mostly expressed in glandular trichomes (lupulin glands), and, to a lower extent, in cones, cones bracts, leaves, stems and roots.

It localises to the cytoplasm. The enzyme catalyses a chalcone = a flavanone.. The protein operates within secondary metabolite biosynthesis; flavonoid biosynthesis. Functionally, involved in the biosynthesis of prenylated phenolics natural products which contribute to the bitter taste of beer and display broad biological activities. Involved in anthocyanin biosynthesis. Polyketide binding proteins (PBP) which promotes the catalytic activities of CHS_H1 and PT1L and triggers demethylxanthohumol (DMX) production. In Humulus lupulus (European hop), this protein is Chalcone isomerase-like protein 2.